The chain runs to 398 residues: Acetate kinase (398 aa).

Asparagine 8 is a binding site for Mg(2+). Lysine 15 lines the ATP pocket. Arginine 89 serves as a coordination point for substrate. Aspartate 146 functions as the Proton donor/acceptor in the catalytic mechanism. ATP contacts are provided by residues 206 to 210 (HIGNG), 283 to 285 (DMR), and 331 to 335 (GMGEN). Glutamate 383 is a Mg(2+) binding site.

It belongs to the acetokinase family. Homodimer. Requires Mg(2+) as cofactor. Mn(2+) serves as cofactor.

It is found in the cytoplasm. The enzyme catalyses acetate + ATP = acetyl phosphate + ADP. It participates in metabolic intermediate biosynthesis; acetyl-CoA biosynthesis; acetyl-CoA from acetate: step 1/2. Its function is as follows. Catalyzes the formation of acetyl phosphate from acetate and ATP. Can also catalyze the reverse reaction. The chain is Acetate kinase from Streptococcus pyogenes serotype M12 (strain MGAS2096).